Consider the following 420-residue polypeptide: Probable serine hydroxymethyltransferase (420 aa).

Residues Leu-121 and 125 to 127 (GHL) contribute to the (6S)-5,6,7,8-tetrahydrofolate site. Lys-230 carries the N6-(pyridoxal phosphate)lysine modification. (6S)-5,6,7,8-tetrahydrofolate is bound by residues Glu-246 and 354–356 (SPF).

It belongs to the SHMT family. Homodimer. Pyridoxal 5'-phosphate serves as cofactor.

The protein resides in the cytoplasm. It catalyses the reaction (6R)-5,10-methylene-5,6,7,8-tetrahydrofolate + glycine + H2O = (6S)-5,6,7,8-tetrahydrofolate + L-serine. It functions in the pathway one-carbon metabolism; tetrahydrofolate interconversion. Functionally, catalyzes the reversible interconversion of serine and glycine with tetrahydrofolate (THF) serving as the one-carbon carrier. This reaction serves as the major source of one-carbon groups required for the biosynthesis of purines, thymidylate, methionine, and other important biomolecules. The polypeptide is Probable serine hydroxymethyltransferase (Rickettsia bellii (strain RML369-C)).